Here is a 183-residue protein sequence, read N- to C-terminus: Tumor necrosis factor ligand superfamily member 4 (183 aa).

The Cytoplasmic portion of the chain corresponds to 1 to 23 (MERVQPLEENVGNAARPRFERNK). A helical; Signal-anchor for type II membrane protein membrane pass occupies residues 24 to 50 (LLLVASVIQGLGLLLCFTYICLHFSAL). One can recognise a THD domain in the interval 51 to 173 (QVSHRYPRIQ…HVNGGELILI (123 aa)). Topologically, residues 51–183 (QVSHRYPRIQ…HQNPGEFCVL (133 aa)) are extracellular. N-linked (GlcNAc...) asparagine glycans are attached at residues asparagine 90, asparagine 114, asparagine 152, and asparagine 157. A disulfide bridge connects residues cysteine 97 and cysteine 181.

This sequence belongs to the tumor necrosis factor family. Homotrimer.

The protein localises to the membrane. Functionally, cytokine that binds to TNFRSF4. Co-stimulates T-cell proliferation and cytokine production. The protein is Tumor necrosis factor ligand superfamily member 4 (TNFSF4) of Homo sapiens (Human).